A 366-amino-acid chain; its full sequence is Ribosomal RNA large subunit methyltransferase M (366 aa).

Residues Ser-188, 221–224, Asp-240, Asp-260, and Asp-277 contribute to the S-adenosyl-L-methionine site; that span reads CPGG. Lys-306 acts as the Proton acceptor in catalysis.

Belongs to the class I-like SAM-binding methyltransferase superfamily. RNA methyltransferase RlmE family. RlmM subfamily. Monomer.

Its subcellular location is the cytoplasm. The catalysed reaction is cytidine(2498) in 23S rRNA + S-adenosyl-L-methionine = 2'-O-methylcytidine(2498) in 23S rRNA + S-adenosyl-L-homocysteine + H(+). Catalyzes the 2'-O-methylation at nucleotide C2498 in 23S rRNA. This is Ribosomal RNA large subunit methyltransferase M from Escherichia coli O139:H28 (strain E24377A / ETEC).